A 211-amino-acid chain; its full sequence is Protein-L-isoaspartate O-methyltransferase (211 aa).

The active site involves Ser62.

This sequence belongs to the methyltransferase superfamily. L-isoaspartyl/D-aspartyl protein methyltransferase family.

It localises to the cytoplasm. It carries out the reaction [protein]-L-isoaspartate + S-adenosyl-L-methionine = [protein]-L-isoaspartate alpha-methyl ester + S-adenosyl-L-homocysteine. Its function is as follows. Catalyzes the methyl esterification of L-isoaspartyl residues in peptides and proteins that result from spontaneous decomposition of normal L-aspartyl and L-asparaginyl residues. It plays a role in the repair and/or degradation of damaged proteins. This is Protein-L-isoaspartate O-methyltransferase from Shewanella loihica (strain ATCC BAA-1088 / PV-4).